The sequence spans 442 residues: Chromosomal replication initiator protein DnaA (442 aa).

The interval 1 to 75 (MDAWPRCLER…GNGEVALAVG (75 aa)) is domain I, interacts with DnaA modulators. The interval 75-104 (GSRPRAPEPLPAPQAVASAPAAAPIVPFAG) is domain II. The interval 105–322 (NLDSHYTFAN…GALNTLVARA (218 aa)) is domain III, AAA+ region. Positions 150, 152, 153, and 154 each coordinate ATP. Residues 323–442 (NFTGRSITVE…WEKLIRKLSE (120 aa)) are domain IV, binds dsDNA.

It belongs to the DnaA family. As to quaternary structure, oligomerizes as a right-handed, spiral filament on DNA at oriC.

The protein resides in the cytoplasm. Functionally, plays an essential role in the initiation and regulation of chromosomal replication. ATP-DnaA binds to the origin of replication (oriC) to initiate formation of the DNA replication initiation complex once per cell cycle. Binds the DnaA box (a 9 base pair repeat at the origin) and separates the double-stranded (ds)DNA. Forms a right-handed helical filament on oriC DNA; dsDNA binds to the exterior of the filament while single-stranded (ss)DNA is stabiized in the filament's interior. The ATP-DnaA-oriC complex binds and stabilizes one strand of the AT-rich DNA unwinding element (DUE), permitting loading of DNA polymerase. After initiation quickly degrades to an ADP-DnaA complex that is not apt for DNA replication. Binds acidic phospholipids. This Xanthomonas campestris pv. campestris (strain B100) protein is Chromosomal replication initiator protein DnaA.